The chain runs to 467 residues: Cysteine--tRNA ligase (467 aa).

Cys-28 is a Zn(2+) binding site. The 'HIGH' region motif lies at 30 to 40 (MTVYDYCHLGH). 3 residues coordinate Zn(2+): Cys-209, His-234, and Glu-238. The 'KMSKS' region signature appears at 266-270 (KMSKS). Residue Lys-269 coordinates ATP.

This sequence belongs to the class-I aminoacyl-tRNA synthetase family. In terms of assembly, monomer. It depends on Zn(2+) as a cofactor.

The protein localises to the cytoplasm. The catalysed reaction is tRNA(Cys) + L-cysteine + ATP = L-cysteinyl-tRNA(Cys) + AMP + diphosphate. The chain is Cysteine--tRNA ligase from Hahella chejuensis (strain KCTC 2396).